The chain runs to 422 residues: Enolase (422 aa).

Glutamine 162 provides a ligand contact to (2R)-2-phosphoglycerate. The active-site Proton donor is glutamate 204. Residues aspartate 241, glutamate 284, and aspartate 311 each coordinate Mg(2+). (2R)-2-phosphoglycerate is bound by residues lysine 336, arginine 365, serine 366, and lysine 387. The active-site Proton acceptor is lysine 336.

Belongs to the enolase family. Mg(2+) is required as a cofactor.

It localises to the cytoplasm. The protein localises to the secreted. The protein resides in the cell surface. The enzyme catalyses (2R)-2-phosphoglycerate = phosphoenolpyruvate + H2O. It participates in carbohydrate degradation; glycolysis; pyruvate from D-glyceraldehyde 3-phosphate: step 4/5. Its function is as follows. Catalyzes the reversible conversion of 2-phosphoglycerate (2-PG) into phosphoenolpyruvate (PEP). It is essential for the degradation of carbohydrates via glycolysis. This chain is Enolase, found in Thermus thermophilus (strain ATCC 27634 / DSM 579 / HB8).